The primary structure comprises 354 residues: Methionine import ATP-binding protein MetN 2 (354 aa).

In terms of domain architecture, ABC transporter spans 6 to 250; it reads IELKNISVHF…PQKPLTKEFI (245 aa). Position 42-49 (42-49) interacts with ATP; it reads GYSGAGKS.

Belongs to the ABC transporter superfamily. Methionine importer (TC 3.A.1.24) family. As to quaternary structure, the complex is composed of two ATP-binding proteins (MetN), two transmembrane proteins (MetI) and a solute-binding protein (MetQ).

It localises to the cell membrane. The enzyme catalyses L-methionine(out) + ATP + H2O = L-methionine(in) + ADP + phosphate + H(+). The catalysed reaction is D-methionine(out) + ATP + H2O = D-methionine(in) + ADP + phosphate + H(+). Its function is as follows. Part of the ABC transporter complex MetNIQ involved in methionine import. Responsible for energy coupling to the transport system. This is Methionine import ATP-binding protein MetN 2 from Oenococcus oeni (strain ATCC BAA-331 / PSU-1).